Reading from the N-terminus, the 421-residue chain is Signal recognition particle receptor FtsY (421 aa).

Positions 1 to 10 (MFSFFRRKKK) are enriched in basic residues. Positions 1 to 22 (MFSFFRRKKKQETPAPEEAQIQ) are disordered. GTP-binding positions include 228–235 (GINGAGKT), 309–313 (DTAGR), and 373–376 (TKLD).

It belongs to the GTP-binding SRP family. FtsY subfamily. Part of the signal recognition particle protein translocation system, which is composed of SRP and FtsY. SRP is a ribonucleoprotein composed of Ffh and a 4.5S RNA molecule.

The protein resides in the cell membrane. The protein localises to the cytoplasm. The catalysed reaction is GTP + H2O = GDP + phosphate + H(+). In terms of biological role, involved in targeting and insertion of nascent membrane proteins into the cytoplasmic membrane. Acts as a receptor for the complex formed by the signal recognition particle (SRP) and the ribosome-nascent chain (RNC). Interaction with SRP-RNC leads to the transfer of the RNC complex to the Sec translocase for insertion into the membrane, the hydrolysis of GTP by both Ffh and FtsY, and the dissociation of the SRP-FtsY complex into the individual components. This is Signal recognition particle receptor FtsY from Neisseria meningitidis serogroup C.